A 331-amino-acid polypeptide reads, in one-letter code: Aromatic 2-oxoacid reductase (331 aa).

NAD(+) is bound by residues 154 to 155 (RI), D175, 205 to 206 (AP), N211, 232 to 234 (AAR), and D258. Residue R234 is part of the active site. E263 is an active-site residue. The active-site Proton donor is the H295.

Belongs to the D-isomer specific 2-hydroxyacid dehydrogenase family.

It catalyses the reaction (R)-3-phenyllactate + NAD(+) = 3-phenylpyruvate + NADH + H(+). The enzyme catalyses (2R)-2-hydroxy-3-(4-hydroxyphenyl)propanoate + NAD(+) = 3-(4-hydroxyphenyl)pyruvate + NADH + H(+). It carries out the reaction 3-(indol-3-yl)lactate + NAD(+) = indole-3-pyruvate + NADH + H(+). It functions in the pathway amino-acid degradation. In terms of biological role, essential for the reductive metabolism of L-phenylalanine, L-tyrosine and L-tryptophan. Catalyzes the conversion of phenylpyruvic acid to phenyllactic acid, 4-hydroxy-phenylpyruvic acid to 4-hydroxy-phenyllactic acid, and indolepyruvic acid to indolelactic acid. The protein is Aromatic 2-oxoacid reductase of Clostridium sporogenes (strain ATCC 15579).